The sequence spans 525 residues: NAD(P)H-quinone oxidoreductase chain 4-2 (525 aa).

The next 14 helical transmembrane spans lie at 6 to 26, 36 to 56, 91 to 111, 115 to 135, 137 to 157, 169 to 189, 212 to 232, 243 to 263, 277 to 297, 314 to 334, 335 to 355, 375 to 397, 417 to 437, and 464 to 484; these read FPWL…IPII, WYAL…FYTS, LIIL…PVTL, LFYF…AVQD, LLFF…LAIW, FILY…TMAF, LLLY…IPLH, TAPA…YALI, FAPV…LTSF, MGFV…GAVL, QMVS…ATYD, IFAM…GFVA, VIVV…LLSM, and VFVI…PKLL.

The protein belongs to the complex I subunit 4 family.

The protein resides in the cellular thylakoid membrane. The catalysed reaction is a plastoquinone + NADH + (n+1) H(+)(in) = a plastoquinol + NAD(+) + n H(+)(out). It catalyses the reaction a plastoquinone + NADPH + (n+1) H(+)(in) = a plastoquinol + NADP(+) + n H(+)(out). Its function is as follows. NDH-1 shuttles electrons from NAD(P)H, via FMN and iron-sulfur (Fe-S) centers, to quinones in the respiratory chain. The immediate electron acceptor for the enzyme in this species is believed to be plastoquinone. Couples the redox reaction to proton translocation (for every two electrons transferred, four hydrogen ions are translocated across the cytoplasmic membrane), and thus conserves the redox energy in a proton gradient. The protein is NAD(P)H-quinone oxidoreductase chain 4-2 (ndhD2) of Nostoc sp. (strain PCC 7120 / SAG 25.82 / UTEX 2576).